Consider the following 272-residue polypeptide: EID1-like F-box protein 3 (272 aa).

Positions serine 29–alanine 81 constitute an F-box domain.

The polypeptide is EID1-like F-box protein 3 (EDL3) (Arabidopsis thaliana (Mouse-ear cress)).